The primary structure comprises 71 residues: Sperm-associated antigen 11A (71 aa).

The signal sequence occupies residues 1-19; that stretch reads MIPRLLPFFASLLFAALLF. 3 disulfide bridges follow: C32-C61, C39-C54, and C44-C62.

Belongs to the beta-defensin family.

The protein resides in the secreted. Functionally, has antimicrobial activity against E.coli. Plays a role in the defense response in the male reproductive tract, contributing to sperm maturation, storage and protection. This is Sperm-associated antigen 11A from Mus musculus (Mouse).